Here is a 152-residue protein sequence, read N- to C-terminus: Transcriptional regulator MraZ (152 aa).

2 consecutive SpoVT-AbrB domains span residues 5-52 (ATLV…PLPE) and 81-124 (ASEC…DETT).

The protein belongs to the MraZ family. Forms oligomers.

Its subcellular location is the cytoplasm. The protein resides in the nucleoid. In terms of biological role, negatively regulates its own expression and that of the subsequent genes in the proximal part of the division and cell wall (dcw) gene cluster. Acts by binding directly to DNA. May also regulate the expression of genes outside the dcw cluster. This is Transcriptional regulator MraZ from Salmonella gallinarum (strain 287/91 / NCTC 13346).